A 1119-amino-acid chain; its full sequence is Transient receptor potential cation channel subfamily A member 1 (1119 aa).

Topologically, residues 1–718 (MKRSLRKMWR…MKWLAYGFRA (718 aa)) are cytoplasmic. 16 ANK repeats span residues 62–92 (MDTF…EVLH), 97–126 (YGNT…NPNL), 130–160 (NMMA…DVNL), 164–193 (NGNT…KPCK), 197–226 (WGCF…EHGY), 238–267 (GKAT…QIDP), 271–301 (GRCT…SVDI), 308–337 (CHET…DINK), 341–370 (EGRS…QVDI), 374–403 (FGRN…QQIK), 412–441 (DGCT…SIHS), 445–474 (DKKS…DTRL), 481–510 (HGMT…LFLS), 513–542 (NGWT…KCTD), 547–576 (DGNT…DIVL), and 579–609 (QQAS…DECL). Disulfide bonds link Cys192–Cys665, Cys462–Cys665, Cys608–Cys621, Cys621–Cys665, and Cys633–Cys856. Pro394 bears the 4-hydroxyproline; by EGLN1; transient; in normoxia and hyperoxia mark. (E)-cinnamaldehyde-binding residues include Cys414 and Cys421. Cys621 serves as a coordination point for (E)-cinnamaldehyde. Cys633 is subject to Cysteine sulfenic acid (-SOH); transient; in hyperoxia. The (E)-cinnamaldehyde site is built by Cys641, Cys665, and Lys710. The chain crosses the membrane as a helical span at residues 719–739 (HMMNLGSYCLGLIPMTILVVN). At 740–767 (IKPGMAFNSTGIINETSDHSEILDTTNS) the chain is on the extracellular side. Residues Asn747 and Asn753 are each glycosylated (N-linked (GlcNAc...) asparagine). Residues 768–793 (YLIKTCMILVFLSSIFGYCKEAGQIF) form a helical membrane-spanning segment. Ca(2+)-binding residues include Glu788 and Gln791. The Cytoplasmic segment spans residues 794-798 (QQKRN). A helical transmembrane segment spans residues 799 to 823 (YFMDISNVLEWIIYTTGIIFVLPLF). Asn805 and Glu808 together coordinate Ca(2+). Residues 824 to 829 (VEIPAH) lie on the Extracellular side of the membrane. Residues 830-850 (LQWQCGAIAVYFYWMNFLLYL) traverse the membrane as a helical segment. Residues 851 to 862 (QRFENCGIFIVM) are Cytoplasmic-facing. Cys856 carries the cysteine sulfenic acid (-SOH); transient; in hyperoxia modification. Residues 863–892 (LEVILKTLLRSTVVFIFLLLAFGLSFYILL) form a helical membrane-spanning segment. The Extracellular segment spans residues 893–901 (NLQDPFSSP). An intramembrane region (pore-forming) is located at residues 902 to 922 (LLSIIQTFSMMLGDINYRESF). Over 923 to 933 (LEPYLRNELAH) the chain is Extracellular. Residues 934–960 (PVLSFAQLVSFTIFVPIVLMNLLIGLA) traverse the membrane as a helical segment. At 961-1119 (VGDIAEVQKH…VKAKTHHLEP (159 aa)) the chain is on the cytoplasmic side. A coiled-coil region spans residues 1042-1071 (MEILKQKYRLKDLTFLLEKQHELIKLIIQK). 1046–1052 (KQKYRLK) is a binding site for a 1,2-diacyl-sn-glycero-3-phospho-(1D-myo-inositol).

The protein belongs to the transient receptor (TC 1.A.4) family. Homotetramer. Interacts with TMEM100. Interacts with EGLN1. Interacts with the scorpion wasabi receptor toxin at the same site that electrophiles but in a non-covalent manner. Post-translationally, TRPA1 activation by electrophiles occurs though covalent modification of specific cysteine residues in the N-terminal cytoplasmic domain. In terms of processing, hydroxylation is required for TRPA1 activity inhibition in normoxia. In hypoxia, the decrease in oxygen concentration diminishes the activity of the hydroxylase EGLN1, thus relieving TRPA1 from inhibition and ultimately leading to channel activation. Oxidation of Cys-633 and Cys-856 in hyperoxia may override the hydroxylase EGLN1-mediated inhibition, causing TRPA1 activation.

The protein resides in the cell membrane. It catalyses the reaction Ca(2+)(in) = Ca(2+)(out). It carries out the reaction Mg(2+)(in) = Mg(2+)(out). The enzyme catalyses Na(+)(in) = Na(+)(out). The catalysed reaction is K(+)(in) = K(+)(out). It catalyses the reaction Zn(2+)(in) = Zn(2+)(out). With respect to regulation, electrophilic ligands activate the channel by covalent modification of intracellular cysteines; Cys-621 plays a key role in covalent binding of electrophiles. Extracellular Ca(2+) both potentiates and inactivates TRPA1; a rapid potentiation follows by slow desensitization. Activated by increase in intracellular Ca(2+) concentration. Inhibited by the potent blocker of TRPV channels ruthenium red, A-967079, AP-18, HC-030031, and aryl sulfonamide derivative (S)-N-(4-chlorobenzyl)-1-((4-fluorophenyl)sulfonyl)pyrrolidine-2-carboxamide (ASD). Activated by benzyl isothiocyanate (BITC), iodoacetamide, sulfhydryl reactive agent MTSEA, N-methyl maleimide (NMM), N-ethylmaleimide (NEM), and 2-aminoethyldiphenylborinate (2-APB). Also activated by hyperoxia. Acivated by intracellular Zn(2+). TRPA1 activation may critically depend on the presence of small intracellular compounds such as polyphosphates. In terms of biological role, ligand-activated Ca(2+)-permeable, nonselective cation channel involved in pain detection and possibly also in cold perception, oxygen concentration perception, cough, itch, and inner ear function. Has a relatively high Ca(2+) selectivity, with a preference for divalent over monovalent cations (Ca(2+) &gt; Ba(2+) &gt; Mg(2+) &gt; NH4(+) &gt; Li(+) &gt; K(+)), the influx of cation into the cytoplasm leads to membrane depolarization. Has a central role in the pain response to endogenous inflammatory mediators, such as bradykinin and to a diverse array of irritants. Activated by a large variety of structurally unrelated electrophilic and non-electrophilic chemical compounds, such as allylthiocyanate (AITC) from mustard oil or wasabi, cinnamaldehyde, diallyl disulfide (DADS) from garlic, and acrolein, an environmental irritant. Electrophilic ligands activate TRPA1 by interacting with critical N-terminal Cys residues in a covalent manner. Non-electrophile agonists bind at distinct sites in the transmembrane domain to promote channel activation. Also acts as an ionotropic cannabinoid receptor by being activated by delta(9)-tetrahydrocannabinol (THC), the psychoactive component of marijuana. May be a component for the mechanosensitive transduction channel of hair cells in inner ear, thereby participating in the perception of sounds. The sequence is that of Transient receptor potential cation channel subfamily A member 1 from Homo sapiens (Human).